A 300-amino-acid chain; its full sequence is Bifunctional protein FolD (300 aa).

Residues 169 to 171 (GRG), serine 196, and isoleucine 237 each bind NADP(+).

It belongs to the tetrahydrofolate dehydrogenase/cyclohydrolase family. As to quaternary structure, homodimer.

The catalysed reaction is (6R)-5,10-methylene-5,6,7,8-tetrahydrofolate + NADP(+) = (6R)-5,10-methenyltetrahydrofolate + NADPH. It catalyses the reaction (6R)-5,10-methenyltetrahydrofolate + H2O = (6R)-10-formyltetrahydrofolate + H(+). It functions in the pathway one-carbon metabolism; tetrahydrofolate interconversion. In terms of biological role, catalyzes the oxidation of 5,10-methylenetetrahydrofolate to 5,10-methenyltetrahydrofolate and then the hydrolysis of 5,10-methenyltetrahydrofolate to 10-formyltetrahydrofolate. The protein is Bifunctional protein FolD of Clavibacter michiganensis subsp. michiganensis (strain NCPPB 382).